We begin with the raw amino-acid sequence, 391 residues long: Succinate--CoA ligase [ADP-forming] subunit beta (391 aa).

Residues 9 to 248 enclose the ATP-grasp domain; sequence KDILRKFGVA…ITEEDPFEVE (240 aa). ATP is bound by residues Lys-50, 57–59, Glu-103, Met-106, and Glu-111; that span reads GRG. Mg(2+)-binding residues include Asn-203 and Asp-217. Residues Asn-268 and 325–327 contribute to the substrate site; that span reads GIV.

Belongs to the succinate/malate CoA ligase beta subunit family. As to quaternary structure, heterotetramer of two alpha and two beta subunits. The cofactor is Mg(2+).

It carries out the reaction succinate + ATP + CoA = succinyl-CoA + ADP + phosphate. The enzyme catalyses GTP + succinate + CoA = succinyl-CoA + GDP + phosphate. Its pathway is carbohydrate metabolism; tricarboxylic acid cycle; succinate from succinyl-CoA (ligase route): step 1/1. Its function is as follows. Succinyl-CoA synthetase functions in the citric acid cycle (TCA), coupling the hydrolysis of succinyl-CoA to the synthesis of either ATP or GTP and thus represents the only step of substrate-level phosphorylation in the TCA. The beta subunit provides nucleotide specificity of the enzyme and binds the substrate succinate, while the binding sites for coenzyme A and phosphate are found in the alpha subunit. In Chlorobium phaeovibrioides (strain DSM 265 / 1930) (Prosthecochloris vibrioformis (strain DSM 265)), this protein is Succinate--CoA ligase [ADP-forming] subunit beta.